A 270-amino-acid chain; its full sequence is NADPH-dependent 7-cyano-7-deazaguanine reductase (270 aa).

79 to 81 (IES) contributes to the substrate binding site. 81-82 (SK) is an NADPH binding site. Cysteine 177 serves as the catalytic Thioimide intermediate. The active-site Proton donor is aspartate 184. Substrate is bound at residue 216–217 (HE). 245–246 (RG) contributes to the NADPH binding site.

It belongs to the GTP cyclohydrolase I family. QueF type 2 subfamily. Homodimer.

The protein localises to the cytoplasm. The catalysed reaction is 7-aminomethyl-7-carbaguanine + 2 NADP(+) = 7-cyano-7-deazaguanine + 2 NADPH + 3 H(+). It participates in tRNA modification; tRNA-queuosine biosynthesis. In terms of biological role, catalyzes the NADPH-dependent reduction of 7-cyano-7-deazaguanine (preQ0) to 7-aminomethyl-7-deazaguanine (preQ1). This chain is NADPH-dependent 7-cyano-7-deazaguanine reductase, found in Acinetobacter baumannii (strain ACICU).